The sequence spans 283 residues: Elongation factor Ts (283 aa).

An involved in Mg(2+) ion dislocation from EF-Tu region spans residues 80-83; that stretch reads TDFV.

It belongs to the EF-Ts family.

The protein resides in the cytoplasm. Functionally, associates with the EF-Tu.GDP complex and induces the exchange of GDP to GTP. It remains bound to the aminoacyl-tRNA.EF-Tu.GTP complex up to the GTP hydrolysis stage on the ribosome. The polypeptide is Elongation factor Ts (Enterobacter sp. (strain 638)).